Consider the following 310-residue polypeptide: N-acetyl-gamma-glutamyl-phosphate reductase (310 aa).

Residue Cys-116 is part of the active site.

Belongs to the NAGSA dehydrogenase family. Type 2 subfamily.

The protein resides in the cytoplasm. The catalysed reaction is N-acetyl-L-glutamate 5-semialdehyde + phosphate + NADP(+) = N-acetyl-L-glutamyl 5-phosphate + NADPH + H(+). It participates in amino-acid biosynthesis; L-arginine biosynthesis; N(2)-acetyl-L-ornithine from L-glutamate: step 3/4. Functionally, catalyzes the NADPH-dependent reduction of N-acetyl-5-glutamyl phosphate to yield N-acetyl-L-glutamate 5-semialdehyde. The chain is N-acetyl-gamma-glutamyl-phosphate reductase from Chelativorans sp. (strain BNC1).